Here is a 239-residue protein sequence, read N- to C-terminus: Enolase-phosphatase E1 (239 aa).

The Mg(2+) site is built by Asp-13 and Glu-15. Substrate is bound by residues 133–134 (SS) and Lys-170. A Mg(2+)-binding site is contributed by Asp-196.

Belongs to the HAD-like hydrolase superfamily. MasA/MtnC family. Monomer. Mg(2+) serves as cofactor.

The protein localises to the cytoplasm. It localises to the nucleus. It carries out the reaction 5-methylsulfanyl-2,3-dioxopentyl phosphate + H2O = 1,2-dihydroxy-5-(methylsulfanyl)pent-1-en-3-one + phosphate. The protein operates within amino-acid biosynthesis; L-methionine biosynthesis via salvage pathway; L-methionine from S-methyl-5-thio-alpha-D-ribose 1-phosphate: step 3/6. It functions in the pathway amino-acid biosynthesis; L-methionine biosynthesis via salvage pathway; L-methionine from S-methyl-5-thio-alpha-D-ribose 1-phosphate: step 4/6. In terms of biological role, bifunctional enzyme that catalyzes the enolization of 2,3-diketo-5-methylthiopentyl-1-phosphate (DK-MTP-1-P) into the intermediate 2-hydroxy-3-keto-5-methylthiopentenyl-1-phosphate (HK-MTPenyl-1-P), which is then dephosphorylated to form the acireductone 1,2-dihydroxy-3-keto-5-methylthiopentene (DHK-MTPene). This chain is Enolase-phosphatase E1, found in Chaetomium globosum (strain ATCC 6205 / CBS 148.51 / DSM 1962 / NBRC 6347 / NRRL 1970) (Soil fungus).